The following is a 515-amino-acid chain: 1-pyrroline-5-carboxylate dehydrogenase 2 (515 aa).

Active-site residues include glutamate 286 and cysteine 320.

This sequence belongs to the aldehyde dehydrogenase family. RocA subfamily.

The catalysed reaction is L-glutamate 5-semialdehyde + NAD(+) + H2O = L-glutamate + NADH + 2 H(+). The protein operates within amino-acid degradation; L-proline degradation into L-glutamate; L-glutamate from L-proline: step 2/2. This chain is 1-pyrroline-5-carboxylate dehydrogenase 2 (rocA2), found in Halalkalibacterium halodurans (strain ATCC BAA-125 / DSM 18197 / FERM 7344 / JCM 9153 / C-125) (Bacillus halodurans).